Here is a 194-residue protein sequence, read N- to C-terminus: Cilia- and flagella-associated protein 107 (194 aa).

Mn regions lie at residues 45-60 (TPQS…FPDH) and 95-107 (ISTY…RHGY).

As to quaternary structure, microtubule inner protein component of sperm flagellar doublet microtubules. In terms of tissue distribution, expressed in airway epithelial cells.

It localises to the cytoplasm. Its subcellular location is the cytoskeleton. It is found in the cilium axoneme. The protein resides in the flagellum axoneme. Its function is as follows. Microtubule inner protein (MIP) part of the dynein-decorated doublet microtubules (DMTs) in cilia axoneme, which is required for motile cilia beating. The protein is Cilia- and flagella-associated protein 107 of Homo sapiens (Human).